We begin with the raw amino-acid sequence, 423 residues long: Adenylosuccinate synthetase (423 aa).

GTP-binding positions include 12 to 18 and 40 to 42; these read GDEGKGK and GHT. Asp13 acts as the Proton acceptor in catalysis. The Mg(2+) site is built by Asp13 and Gly40. Residues 13-16, 38-41, Thr129, Arg143, Gln221, Thr236, and Arg300 each bind IMP; these read DEGK and NAGH. His41 serves as the catalytic Proton donor. 296-302 contacts substrate; sequence AVTGRER. GTP-binding positions include Arg302, 328-330, and 408-410; these read KSD and SVG.

It belongs to the adenylosuccinate synthetase family. Homodimer. It depends on Mg(2+) as a cofactor.

The protein localises to the cytoplasm. The enzyme catalyses IMP + L-aspartate + GTP = N(6)-(1,2-dicarboxyethyl)-AMP + GDP + phosphate + 2 H(+). The protein operates within purine metabolism; AMP biosynthesis via de novo pathway; AMP from IMP: step 1/2. In terms of biological role, plays an important role in the de novo pathway of purine nucleotide biosynthesis. Catalyzes the first committed step in the biosynthesis of AMP from IMP. This chain is Adenylosuccinate synthetase, found in Phocaeicola vulgatus (strain ATCC 8482 / DSM 1447 / JCM 5826 / CCUG 4940 / NBRC 14291 / NCTC 11154) (Bacteroides vulgatus).